The following is a 347-amino-acid chain: D-alanine--D-alanine ligase (347 aa).

The ATP-grasp domain occupies 131–333; that stretch reads KRVLESAGIA…YPELIERLVD (203 aa). Residue 161-216 participates in ATP binding; sequence EEKLAYPVFTKPSNMGSSVGISKSENQEELRPALELAFRYDSRVLVEQGVNAREIE. Mg(2+)-binding residues include aspartate 287, glutamate 300, and asparagine 302.

This sequence belongs to the D-alanine--D-alanine ligase family. Mg(2+) is required as a cofactor. Mn(2+) serves as cofactor.

Its subcellular location is the cytoplasm. The catalysed reaction is 2 D-alanine + ATP = D-alanyl-D-alanine + ADP + phosphate + H(+). Its pathway is cell wall biogenesis; peptidoglycan biosynthesis. Cell wall formation. The polypeptide is D-alanine--D-alanine ligase (Streptococcus pneumoniae (strain Taiwan19F-14)).